A 367-amino-acid polypeptide reads, in one-letter code: Phosphoribosylaminoimidazole-succinocarboxamide synthase (367 aa).

The protein belongs to the SAICAR synthetase family.

The enzyme catalyses 5-amino-1-(5-phospho-D-ribosyl)imidazole-4-carboxylate + L-aspartate + ATP = (2S)-2-[5-amino-1-(5-phospho-beta-D-ribosyl)imidazole-4-carboxamido]succinate + ADP + phosphate + 2 H(+). It functions in the pathway purine metabolism; IMP biosynthesis via de novo pathway; 5-amino-1-(5-phospho-D-ribosyl)imidazole-4-carboxamide from 5-amino-1-(5-phospho-D-ribosyl)imidazole-4-carboxylate: step 1/2. The protein is Phosphoribosylaminoimidazole-succinocarboxamide synthase of Shewanella sp. (strain ANA-3).